Reading from the N-terminus, the 392-residue chain is 8-amino-7-oxononanoate synthase (392 aa).

Arginine 21 contacts substrate. 114 to 115 (GY) contacts pyridoxal 5'-phosphate. Position 139 (histidine 139) interacts with substrate. Pyridoxal 5'-phosphate is bound by residues serine 187, 212–215 (DEAH), and 243–246 (TFGK). Position 246 is an N6-(pyridoxal phosphate)lysine (lysine 246). Position 359 (threonine 359) interacts with substrate.

It belongs to the class-II pyridoxal-phosphate-dependent aminotransferase family. BioF subfamily. As to quaternary structure, homodimer. Pyridoxal 5'-phosphate serves as cofactor.

It catalyses the reaction 6-carboxyhexanoyl-[ACP] + L-alanine + H(+) = (8S)-8-amino-7-oxononanoate + holo-[ACP] + CO2. The protein operates within cofactor biosynthesis; biotin biosynthesis. Its function is as follows. Catalyzes the decarboxylative condensation of pimeloyl-[acyl-carrier protein] and L-alanine to produce 8-amino-7-oxononanoate (AON), [acyl-carrier protein], and carbon dioxide. The protein is 8-amino-7-oxononanoate synthase of Chlorobaculum parvum (strain DSM 263 / NCIMB 8327) (Chlorobium vibrioforme subsp. thiosulfatophilum).